The primary structure comprises 315 residues: DDRGK domain-containing protein 1 (315 aa).

The helical transmembrane segment at 1–28 threads the bilayer; the sequence is MVGPWVYLVAAVLLIGLILFLTRSRGRA. A mediates interaction with CDK5RAP3 region spans residues 1–115; it reads MVGPWVYLVA…IEKPAEVHPT (115 aa). Residues 29–315 are Cytoplasmic-facing; it reads AAADGEPLHN…GQDLPAQASA (287 aa). Residues 30–184 form a disordered region; that stretch reads AADGEPLHNE…ERKAQEEQAR (155 aa). A compositionally biased stretch (basic and acidic residues) spans 34–43; the sequence is EPLHNEEERA. Residue S73 is modified to Phosphoserine. The interval 119–217 is mediates interaction with TRIP4; that stretch reads GAKKLRKLEE…MTEEQSHSFL (99 aa). The segment covering 125-184 has biased composition (basic and acidic residues); it reads KLEEKQARKAQREAEEAEREERKRLESQREAEWKKEEERLRLKEEQKEEEERKAQEEQAR. The UFM1-interacting motif (UFIM) motif lies at 196–210; that stretch reads AFVVEEEGVSETMTE. The segment at 217 to 315 is mediates interaction with UFL1; it reads LTEFINYIKK…GQDLPAQASA (99 aa). Residues 230–274 form the PCI domain; it reads VLLEDLAFQMGLRTQDAINRIQDLLTEGTLTGVIDDRGKFIYITP. K268 is covalently cross-linked (Glycyl lysine isopeptide (Lys-Gly) (interchain with G-Cter in UFM1)).

Belongs to the DDRGK1 family. As to quaternary structure, component of the UFM1 ribosome E3 ligase (UREL) complex, composed of UFL1, DDRGK1 and CDK5RAP3. Interacts with (unphosphorylated) ERN1/IRE1-alpha; interaction is dependent on UFM1 and takes place in response to endoplasmic reticulum stress, regulating ERN1/IRE1-alpha stability. Interacts with NFKBIA. Interacts with SOX9. Post-translationally, ufmylated; conjugated to ubiquitin-like protein UFM1, probably at Lys-268 by UFL1. The relevance of ufmylation is however unclear: as DDRGK1 acts as a substrate adapter for ufmylation, it is uncertain whether ufmylation is a collateral effect of the ufmylation process or whether it is required to regulate its activity. Ubiquitinated. Ubiquitination probably triggers proteasomal degradation and is negatively regulated by UFL1, the enzyme involved in the ufmylation of DDRGK1. In terms of tissue distribution, ubiquitously expressed. Higher expression in pancreatic islets, pancreatic acini and testis (at protein level). Highly expressed in the intestinal exocrine cells.

It localises to the endoplasmic reticulum membrane. Its function is as follows. Component of the UFM1 ribosome E3 ligase (UREL) complex, a multiprotein complex that catalyzes ufmylation of endoplasmic reticulum-docked proteins. The UREL complex plays a key role in ribosome recycling by mediating mono-ufmylation of the RPL26/uL24 subunit of the 60S ribosome following ribosome dissociation: ufmylation weakens the junction between post-termination 60S subunits and SEC61 translocons, promoting release and recycling of the large ribosomal subunit from the endoplasmic reticulum membrane. Ufmylation of RPL26/uL24 and subsequent 60S ribosome recycling either take place after normal termination of translation or after ribosome stalling during cotranslational translocation at the endoplasmic reticulum. Within the UREL complex, DDRGK1 tethers the complex to the endoplasmic reticulum membrane to restrict its activity to endoplasmic reticulum-docked ribosomes and acts as an ufmylation 'reader': following RPL26/uL24 ufmylation, DDRGK1 specifically binds to ufmylated RPL26/uL24 via its UFIM motif, resulting in stable association between the 60S ribosome and the UREL complex, followed by dissociation of the 60S ribosome subunit from the endoplasmic reticulum membrane. The UREL complex is also involved in reticulophagy in response to endoplasmic reticulum stress by promoting ufmylation of proteins such as CYB5R3 and RPN1, thereby promoting lysosomal degradation of ufmylated proteins. Ufmylation-dependent reticulophagy inhibits the unfolded protein response (UPR) by regulating ERN1/IRE1-alpha stability. Acts as a regulator of immunity by promoting differentiation of B-cells into plasma cells: acts by promoting expansion of the endoplasmic reticulum and regulating the unfolded protein response (UPR). May also be required for TRIP4 ufmylation. May play a role in NF-kappa-B-mediated transcription through regulation of the phosphorylation and the degradation of NFKBIA, the inhibitor of NF-kappa-B. Plays a role in cartilage development through SOX9, inhibiting the ubiquitin-mediated proteasomal degradation of this transcriptional regulator. Required for stabilization and ufmylation of ATG9A. This chain is DDRGK domain-containing protein 1, found in Mus musculus (Mouse).